Reading from the N-terminus, the 197-residue chain is Adenylyl-sulfate kinase (197 aa).

Glycine 31–serine 38 is a binding site for ATP. The Phosphoserine intermediate role is filled by serine 105.

It belongs to the APS kinase family.

The enzyme catalyses adenosine 5'-phosphosulfate + ATP = 3'-phosphoadenylyl sulfate + ADP + H(+). It participates in sulfur metabolism; hydrogen sulfide biosynthesis; sulfite from sulfate: step 2/3. In terms of biological role, catalyzes the synthesis of activated sulfate. The polypeptide is Adenylyl-sulfate kinase (Aeromonas hydrophila subsp. hydrophila (strain ATCC 7966 / DSM 30187 / BCRC 13018 / CCUG 14551 / JCM 1027 / KCTC 2358 / NCIMB 9240 / NCTC 8049)).